The following is a 528-amino-acid chain: Esterase PE16 (528 aa).

Residues 1 to 93 (MSFVFAVPEM…AGWYVDAEAA (93 aa)) enclose the PE domain. The interval 94-143 (NAALVDTAATGASELGSGGRTALILGSTGTPRPPFDYMQQVYDRYIAPHY) is linker. A PE-PPE domain is found at 149 to 369 (SGLYTPAQFQ…LRAIIELGYD (221 aa)). S199 is a catalytic residue. Residues 503–523 (IALLVFAAGIPAVAAVAILTG) form a helical membrane-spanning segment.

Belongs to the mycobacterial PE family.

It localises to the membrane. It catalyses the reaction a hexanoate ester + H2O = an aliphatic alcohol + hexanoate + H(+). It carries out the reaction an octanoate ester + H2O = an aliphatic alcohol + octanoate + H(+). The catalysed reaction is a butanoate ester + H2O = an aliphatic alcohol + butanoate + H(+). Its activity is regulated as follows. Esterase activity is significantly inhibited by the serine modifier phenylmethylsulfonyl fluoride (PMSF). Functionally, esterase that hydrolyzes short to medium chain fatty acid esters with the highest specific activity for p-nitrophenyl caproate (pNPC6). Has lower activity with p-nitrophenyl caprylate (pNPC8) and p-nitrophenyl butyrate (pNPC4). Has weak activity with p-nitrophenyl caprate (pNPC10) and p-nitrophenyl laurate (pNPC12). Does not possess lipolytic activity and cutinase activity. This chain is Esterase PE16, found in Mycobacterium tuberculosis (strain ATCC 25618 / H37Rv).